A 348-amino-acid chain; its full sequence is tRNA N6-adenosine threonylcarbamoyltransferase (348 aa).

Histidine 119 and histidine 123 together coordinate Fe cation. Residues 141 to 145 (LVSGG), aspartate 174, glycine 187, aspartate 191, and asparagine 280 each bind substrate. Aspartate 310 is a Fe cation binding site.

Belongs to the KAE1 / TsaD family. It depends on Fe(2+) as a cofactor.

The protein localises to the cytoplasm. The catalysed reaction is L-threonylcarbamoyladenylate + adenosine(37) in tRNA = N(6)-L-threonylcarbamoyladenosine(37) in tRNA + AMP + H(+). In terms of biological role, required for the formation of a threonylcarbamoyl group on adenosine at position 37 (t(6)A37) in tRNAs that read codons beginning with adenine. Is involved in the transfer of the threonylcarbamoyl moiety of threonylcarbamoyl-AMP (TC-AMP) to the N6 group of A37, together with TsaE and TsaB. TsaD likely plays a direct catalytic role in this reaction. In Enterococcus faecalis (strain ATCC 700802 / V583), this protein is tRNA N6-adenosine threonylcarbamoyltransferase.